Consider the following 299-residue polypeptide: Bifunctional protein FolD 1 (299 aa).

NADP(+) contacts are provided by residues 168 to 170 (GRS), Ser193, and Ile234.

This sequence belongs to the tetrahydrofolate dehydrogenase/cyclohydrolase family. Homodimer.

The enzyme catalyses (6R)-5,10-methylene-5,6,7,8-tetrahydrofolate + NADP(+) = (6R)-5,10-methenyltetrahydrofolate + NADPH. It carries out the reaction (6R)-5,10-methenyltetrahydrofolate + H2O = (6R)-10-formyltetrahydrofolate + H(+). It participates in one-carbon metabolism; tetrahydrofolate interconversion. In terms of biological role, catalyzes the oxidation of 5,10-methylenetetrahydrofolate to 5,10-methenyltetrahydrofolate and then the hydrolysis of 5,10-methenyltetrahydrofolate to 10-formyltetrahydrofolate. In Rhizobium etli (strain ATCC 51251 / DSM 11541 / JCM 21823 / NBRC 15573 / CFN 42), this protein is Bifunctional protein FolD 1.